A 274-amino-acid chain; its full sequence is tRNA (guanine-N(7)-)-methyltransferase (274 aa).

A disordered region spans residues 16 to 40 (ASASRGAATGSRGVAPAVPRGGAPA). S-adenosyl-L-methionine contacts are provided by E106, E131, D158, and D181. Residue D181 is part of the active site. Residues K185, D217, and 252 to 255 (TKFE) each bind substrate.

The protein belongs to the class I-like SAM-binding methyltransferase superfamily. TrmB family.

It catalyses the reaction guanosine(46) in tRNA + S-adenosyl-L-methionine = N(7)-methylguanosine(46) in tRNA + S-adenosyl-L-homocysteine. The protein operates within tRNA modification; N(7)-methylguanine-tRNA biosynthesis. Catalyzes the formation of N(7)-methylguanine at position 46 (m7G46) in tRNA. This chain is tRNA (guanine-N(7)-)-methyltransferase, found in Verminephrobacter eiseniae (strain EF01-2).